Consider the following 227-residue polypeptide: Lipoprotein-releasing system ATP-binding protein LolD (227 aa).

The 222-residue stretch at 6 to 227 (LTSQKLYKSY…LHEGSLYARE (222 aa)) folds into the ABC transporter domain. 42-49 (GPSGSGKS) provides a ligand contact to ATP.

The protein belongs to the ABC transporter superfamily. Lipoprotein translocase (TC 3.A.1.125) family. In terms of assembly, the complex is composed of two ATP-binding proteins (LolD) and two transmembrane proteins (LolC and LolE).

It is found in the cell inner membrane. Functionally, part of the ABC transporter complex LolCDE involved in the translocation of mature outer membrane-directed lipoproteins, from the inner membrane to the periplasmic chaperone, LolA. Responsible for the formation of the LolA-lipoprotein complex in an ATP-dependent manner. This chain is Lipoprotein-releasing system ATP-binding protein LolD, found in Legionella pneumophila (strain Lens).